The primary structure comprises 118 residues: Large ribosomal subunit protein eL18 (118 aa).

This sequence belongs to the eukaryotic ribosomal protein eL18 family.

This is Large ribosomal subunit protein eL18 from Sulfurisphaera tokodaii (strain DSM 16993 / JCM 10545 / NBRC 100140 / 7) (Sulfolobus tokodaii).